The sequence spans 298 residues: MEPQAEERTLGEPAPPPSGALASPTPDEEERTEGGAPPTATPAGASGDSTSADGLWGLPVEHAERRPECGRCSRPQKVCLCPYLPVRPLQISTHLYIIQHPAEESRVLRTVPLLAACLPPDRCTVKIGRRFSEERDVELATVCRDSGTLILYPGAEATNLEEFILDSPVYPSTIILIDGTWSQAKDIFYKNSLFRLPKQVQLKTSVCSQYVIRMQPTNRCLSTLECAAVALSILEKNNCIQETLLRPLQALCSFQLQHGAQIRLSKEYLLRNGLYPKPMPKNKRKLRKMELLMNSVKI.

The residue at position 1 (M1) is an N-acetylmethionine. The segment covering 1–10 (MEPQAEERTL) has biased composition (basic and acidic residues). Residues 1–55 (MEPQAEERTLGEPAPPPSGALASPTPDEEERTEGGAPPTATPAGASGDSTSADGL) are disordered. The span at 34–45 (GGAPPTATPAGA) shows a compositional bias: low complexity. At S132 the chain carries Phosphoserine. The short motif at 178–181 (DGTW) is the DXTW element.

The protein belongs to the TDD superfamily. DTWD2 family.

It localises to the nucleus. Its subcellular location is the cytoplasm. The enzyme catalyses a uridine in tRNA + S-adenosyl-L-methionine = a 3-[(3S)-3-amino-3-carboxypropyl]uridine in tRNA + S-methyl-5'-thioadenosine + H(+). In terms of biological role, catalyzes the formation of 3-(3-amino-3-carboxypropyl)uridine (acp3U) at position 20a in the D-loop of several cytoplasmic tRNAs (acp3U(20a)). Also has a weak activity to form acp3U at position 20 in the D-loop of tRNAs (acp3U(20)). Involved in glycoRNA biosynthesis by mediating formation of acp3U, which acts as an attachment site for N-glycans on tRNAs. GlycoRNAs consist of RNAs modified with secretory N-glycans that are presented on the cell surface. The protein is tRNA-uridine aminocarboxypropyltransferase 2 of Mus musculus (Mouse).